Consider the following 462-residue polypeptide: NAD-capped RNA hydrolase NUDT12 (462 aa).

Residue K10 is modified to N6-succinyllysine. ANK repeat units lie at residues 11-40, 45-74, and 78-98; these read EMISELHSSAAEGNVAKLAGILSHSPSLLN, NGWTALMYAARNGHPDVVQFLLEKGCDRSL, and ARQTALDIAAFWGYRHIANLL. K185 carries the N6-succinyllysine modification. Zn(2+)-binding residues include C284 and C287. K292 carries the N6-succinyllysine modification. Zn(2+) is bound by residues C302 and C307. Substrate contacts are provided by residues Y318, 354-356, E370, E374, and E415; that span reads AGF. Residues 319–453 enclose the Nudix hydrolase domain; it reads PRVDPVVIMQ…SRAIAHQLIK (135 aa). The Mg(2+) site is built by A354, E370, E374, and E415. The Nudix box signature appears at 355–376; it reads GFIEPGETIEDAVRREVEEESG. Positions 460-462 match the Microbody targeting signal motif; that stretch reads PNL.

This sequence belongs to the Nudix hydrolase family. NudC subfamily. As to quaternary structure, homodimer. Homodimerization is essential for its catalytic activity and protein stability. Interacts (via ANK repeats) with BLMH. The cofactor is Mg(2+). Zn(2+) is required as a cofactor. Expressed abundantly in the liver and kidney.

The protein localises to the cytoplasm. Its subcellular location is the peroxisome. It localises to the cytoplasmic granule. The enzyme catalyses a 5'-end NAD(+)-phospho-ribonucleoside in mRNA + H2O = a 5'-end phospho-adenosine-phospho-ribonucleoside in mRNA + beta-nicotinamide D-ribonucleotide + 2 H(+). The catalysed reaction is NAD(+) + H2O = beta-nicotinamide D-ribonucleotide + AMP + 2 H(+). It catalyses the reaction NADH + H2O = reduced beta-nicotinamide D-ribonucleotide + AMP + 2 H(+). It carries out the reaction NADPH + H2O = reduced beta-nicotinamide D-ribonucleotide + adenosine 2',5'-bisphosphate + 2 H(+). Its function is as follows. mRNA decapping enzyme that specifically removes the nicotinamide adenine dinucleotide (NAD) cap from a subset of mRNAs by hydrolyzing the diphosphate linkage to produce nicotinamide mononucleotide (NMN) and 5' monophosphate mRNA. The NAD-cap is present at the 5'-end of some RNAs; in contrast to the canonical N7 methylguanosine (m7G) cap, the NAD cap promotes mRNA decay. Preferentially acts on NAD-capped transcripts in response to nutrient stress. Also acts on free nicotinamide adenine dinucleotide molecules: hydrolyzes NAD(H) into NMN(H) and AMP, and NADPH into NMNH and 2',5'-ADP. May act to regulate the concentration of peroxisomal nicotinamide nucleotide cofactors required for oxidative metabolism in this organelle. Regulates the levels of circadian clock components PER1, PER2, PER3 and CRY2 in the liver. The polypeptide is NAD-capped RNA hydrolase NUDT12 (Mus musculus (Mouse)).